Reading from the N-terminus, the 1241-residue chain is Phosphorylase b kinase regulatory subunit alpha, skeletal muscle isoform (1241 aa).

Residues serine 629, serine 730, serine 736, serine 739, serine 759, serine 812, serine 973, serine 982, and serine 986 each carry the phosphoserine modification. The interval 811-841 is calmodulin-binding; the sequence is LSELYVKVGEIRHWGLIRYISGILRKKVEAL. Position 1008 is a phosphoserine; by autocatalysis (serine 1008). Position 1019 is a phosphoserine; by PKA (serine 1019). Residues serine 1021 and serine 1024 each carry the phosphoserine modification. The segment at 1064-1104 is calmodulin-binding; sequence SKDSRQGQWQRRRRLDGALNRVPIGFYQKVWKILQKCHGLS. Serine 1131 is subject to Phosphoserine. Cysteine 1238 carries S-farnesyl cysteine lipidation.

Belongs to the phosphorylase b kinase regulatory chain family. In terms of assembly, hexadecamer of 4 heterotetramers, each composed of alpha, beta, gamma, and delta subunits. Alpha (PHKA1 or PHKA2) and beta (PHKB) are regulatory subunits, gamma (PHKG1 or PHKG2) is the catalytic subunit, and delta is calmodulin. Post-translationally, although the final Cys may be farnesylated, the terminal tripeptide is probably not removed, and the C-terminus is not methylated. In terms of tissue distribution, both isoforms are expressed in muscle.

It is found in the cell membrane. The protein operates within glycan biosynthesis; glycogen metabolism. By phosphorylation of various serine residues and by calcium. In terms of biological role, phosphorylase b kinase catalyzes the phosphorylation of serine in certain substrates, including troponin I. The alpha chain may bind calmodulin. This is Phosphorylase b kinase regulatory subunit alpha, skeletal muscle isoform (Phka1) from Mus musculus (Mouse).